Reading from the N-terminus, the 245-residue chain is Phycocyanobilin:ferredoxin oxidoreductase (245 aa).

The protein belongs to the HY2 family.

It carries out the reaction (2R,3Z)-phycocyanobilin + 4 oxidized [2Fe-2S]-[ferredoxin] = biliverdin IXalpha + 4 reduced [2Fe-2S]-[ferredoxin] + 4 H(+). Catalyzes the four-electron reduction of biliverdin IX-alpha (2-electron reduction at both the A and D rings); the reaction proceeds via an isolatable 2-electron intermediate, 181,182-dihydrobiliverdin. In Nostoc punctiforme (strain ATCC 29133 / PCC 73102), this protein is Phycocyanobilin:ferredoxin oxidoreductase (pcyA).